A 356-amino-acid chain; its full sequence is UDP-N-acetylenolpyruvoylglucosamine reductase (356 aa).

An FAD-binding PCMH-type domain is found at 19 to 227 (LGGPAARFCS…RDAVLSLRRS (209 aa)). Arg-167 is an active-site residue. Residue Ser-244 is the Proton donor of the active site. Glu-348 is an active-site residue.

Belongs to the MurB family. FAD is required as a cofactor.

Its subcellular location is the cytoplasm. The enzyme catalyses UDP-N-acetyl-alpha-D-muramate + NADP(+) = UDP-N-acetyl-3-O-(1-carboxyvinyl)-alpha-D-glucosamine + NADPH + H(+). It participates in cell wall biogenesis; peptidoglycan biosynthesis. In terms of biological role, cell wall formation. In Thermobifida fusca (strain YX), this protein is UDP-N-acetylenolpyruvoylglucosamine reductase.